A 145-amino-acid polypeptide reads, in one-letter code: Large ribosomal subunit protein bL19 (145 aa).

Positions 112–130 (GKSARIKERRPAKAVEKTS) are enriched in basic and acidic residues. The tract at residues 112-145 (GKSARIKERRPAKAVEKTSKPASAKKPAAKANKK) is disordered.

This sequence belongs to the bacterial ribosomal protein bL19 family.

Functionally, this protein is located at the 30S-50S ribosomal subunit interface and may play a role in the structure and function of the aminoacyl-tRNA binding site. This Malacoplasma penetrans (strain HF-2) (Mycoplasma penetrans) protein is Large ribosomal subunit protein bL19.